We begin with the raw amino-acid sequence, 750 residues long: Photosystem I P700 chlorophyll a apoprotein A1 (750 aa).

Helical transmembrane passes span 70–93, 156–179, 195–219, 291–309, 346–369, 385–411, 433–455, and 531–549; these read IFSAHFGQLSIIFLWLSGMYFHGA, LYCTAIGALVFAALMLFAGWFHYH, LNHHLAGLLGLGSLSWAGHQVHVSL, IAHHHLAIAILFLIAGHMY, WHAQLALNLAMLGSLTIVVAHHMY, LSLFTHHMWIGGFLIVGAAAHAAIFMV, AIISHLNWACIFLGFHSFGLYIH, and FLVHHIHAFTIHVTVLILL. Positions 573 and 582 each coordinate [4Fe-4S] cluster. 2 helical membrane-spanning segments follow: residues 589 to 610 and 664 to 686; these read HVFLGLFWMYNAISVVIFHFSW and LSAYGLFFLGAHFVWAFSLMFLF. Position 675 (histidine 675) interacts with chlorophyll a'. 2 residues coordinate chlorophyll a: methionine 683 and tyrosine 691. Tryptophan 692 is a binding site for phylloquinone. The helical transmembrane segment at 724 to 744 threads the bilayer; sequence AVGVTHYLLGGIATTWAFFLA.

Belongs to the PsaA/PsaB family. As to quaternary structure, the PsaA/B heterodimer binds the P700 chlorophyll special pair and subsequent electron acceptors. PSI consists of a core antenna complex that captures photons, and an electron transfer chain that converts photonic excitation into a charge separation. The eukaryotic PSI reaction center is composed of at least 11 subunits. P700 is a chlorophyll a/chlorophyll a' dimer, A0 is one or more chlorophyll a, A1 is one or both phylloquinones and FX is a shared 4Fe-4S iron-sulfur center. serves as cofactor.

It localises to the plastid. The protein resides in the chloroplast thylakoid membrane. It carries out the reaction reduced [plastocyanin] + hnu + oxidized [2Fe-2S]-[ferredoxin] = oxidized [plastocyanin] + reduced [2Fe-2S]-[ferredoxin]. PsaA and PsaB bind P700, the primary electron donor of photosystem I (PSI), as well as the electron acceptors A0, A1 and FX. PSI is a plastocyanin-ferredoxin oxidoreductase, converting photonic excitation into a charge separation, which transfers an electron from the donor P700 chlorophyll pair to the spectroscopically characterized acceptors A0, A1, FX, FA and FB in turn. Oxidized P700 is reduced on the lumenal side of the thylakoid membrane by plastocyanin. The protein is Photosystem I P700 chlorophyll a apoprotein A1 of Nandina domestica (Heavenly bamboo).